A 364-amino-acid chain; its full sequence is Carbamoyl phosphate synthase small chain (364 aa).

CPSase regions lie at residues 1–167 (MKRQ…PSPG) and 1–171 (MKRQ…RGER). Positions 45, 219, and 221 each coordinate L-glutamine. A Glutamine amidotransferase type-1 domain is found at 171–358 (RIVLIDFGMK…LALIREFNKK (188 aa)). Cys-246 functions as the Nucleophile in the catalytic mechanism. Residues Leu-247, Gln-250, Asn-288, Gly-290, and Tyr-291 each coordinate L-glutamine. Catalysis depends on residues His-331 and Glu-333.

It belongs to the CarA family. As to quaternary structure, composed of two chains; the small (or glutamine) chain promotes the hydrolysis of glutamine to ammonia, which is used by the large (or ammonia) chain to synthesize carbamoyl phosphate. Tetramer of heterodimers (alpha,beta)4.

The catalysed reaction is hydrogencarbonate + L-glutamine + 2 ATP + H2O = carbamoyl phosphate + L-glutamate + 2 ADP + phosphate + 2 H(+). It carries out the reaction L-glutamine + H2O = L-glutamate + NH4(+). The protein operates within amino-acid biosynthesis; L-arginine biosynthesis; carbamoyl phosphate from bicarbonate: step 1/1. It participates in pyrimidine metabolism; UMP biosynthesis via de novo pathway; (S)-dihydroorotate from bicarbonate: step 1/3. Functionally, small subunit of the glutamine-dependent carbamoyl phosphate synthetase (CPSase). CPSase catalyzes the formation of carbamoyl phosphate from the ammonia moiety of glutamine, carbonate, and phosphate donated by ATP, constituting the first step of 2 biosynthetic pathways, one leading to arginine and/or urea and the other to pyrimidine nucleotides. The small subunit (glutamine amidotransferase) binds and cleaves glutamine to supply the large subunit with the substrate ammonia. The chain is Carbamoyl phosphate synthase small chain from Bacillus caldolyticus.